Consider the following 535-residue polypeptide: Flavin-containing monooxygenase 1 (535 aa).

N-acetylalanine is present on Ala2. At 2–513 (AKRVAIVGAG…TRIVQESSSP (512 aa)) the chain is on the lumenal side. FAD is bound by residues 9 to 13 (GAGVS), Glu32, 40 to 41 (LW), and 61 to 62 (NS). Residues 60–61 (SN) and 195–198 (SGTD) each bind NADP(+). Residues 514–534 (FESLLKLFAVLALLVSVFLIF) form a helical membrane-spanning segment. A topological domain (cytoplasmic) is located at residue Leu535.

Belongs to the FMO family. Requires FAD as cofactor. Liver.

It localises to the endoplasmic reticulum membrane. The enzyme catalyses hypotaurine + NADPH + O2 + H(+) = taurine + NADP(+) + H2O. The catalysed reaction is hypotaurine + NADH + O2 + H(+) = taurine + NAD(+) + H2O. It carries out the reaction trimethylamine + NADPH + O2 = trimethylamine N-oxide + NADP(+) + H2O. It catalyses the reaction N,N-dimethylaniline + NADPH + O2 + H(+) = N,N-dimethylaniline N-oxide + NADP(+) + H2O. Its function is as follows. Broad spectrum monooxygenase that catalyzes the oxygenation of a wide variety of nitrogen- and sulfur-containing compounds including xenobiotics. Catalyzes the S-oxygenation of hypotaurine to produce taurine, an organic osmolyte involved in cell volume regulation as well as a variety of cytoprotective and developmental processes. In vitro, catalyzes the N-oxygenation of trimethylamine (TMA) to produce trimethylamine N-oxide (TMAO) and could therefore participate to the detoxification of this compound that is generated by the action of gut microbiota from dietary precursors such as choline, choline containing compounds, betaine or L-carnitine. The polypeptide is Flavin-containing monooxygenase 1 (FMO1) (Oryctolagus cuniculus (Rabbit)).